Consider the following 302-residue polypeptide: S-crystallin SL4 (302 aa).

Tandem repeats lie at residues 45–54, 55–64, and 65–74. The interval 45–84 is 4 X approximate tandem repeats of G-G-Y-[AYP]-V-[QK]-[SG]-R-G-D; the sequence is GGYAVQSRGDGGYYVKSRGDGGYPVQGRGDTGYSSQTRSD. 3 consecutive short sequence motifs (cell attachment site) follow at residues 52 to 54, 62 to 64, and 72 to 74; these read RGD. Residues 68–92 are disordered; it reads PVQGRGDTGYSSQTRSDDACLGQGR. A 4; approximate repeat occupies 75-84; the sequence is TGYSSQTRSD. Positions 113–115 match the Cell attachment site motif; sequence RGD. Positions 118–205 are disordered; that stretch reads SDINSGLYSG…ESASRRSRNH (88 aa). Composition is skewed to basic and acidic residues over residues 129 to 166 and 177 to 192; these read RMDD…HYRS and AEDR…RIDI. A GST C-terminal domain is found at 183-302; it reads GHSDSHRIDI…YIKRRYQSDF (120 aa).

It belongs to the GST superfamily.

In terms of biological role, S-crystallins are structural components of squids and octopi eye lens. The polypeptide is S-crystallin SL4 (Nototodarus sloanii (Wellington flying squid)).